Reading from the N-terminus, the 663-residue chain is UvrABC system protein B (663 aa).

The region spanning 30-417 is the Helicase ATP-binding domain; it reads DGIKAGKRHQ…TDKMVEQIIR (388 aa). An ATP-binding site is contributed by 43-50; sequence GATGTGKT. Positions 96-119 match the Beta-hairpin motif; the sequence is YYDYYQPEAYVPSTDTFIEKDASI. Residues 434-600 form the Helicase C-terminal domain; that stretch reads QIDDLLSEIQ…TINKKIHDLI (167 aa). The UVR domain occupies 627–662; it reads QKTIDNIEKEMKQAAKDLDFEKATELRDMLFELKAE.

It belongs to the UvrB family. As to quaternary structure, forms a heterotetramer with UvrA during the search for lesions. Interacts with UvrC in an incision complex.

The protein localises to the cytoplasm. In terms of biological role, the UvrABC repair system catalyzes the recognition and processing of DNA lesions. A damage recognition complex composed of 2 UvrA and 2 UvrB subunits scans DNA for abnormalities. Upon binding of the UvrA(2)B(2) complex to a putative damaged site, the DNA wraps around one UvrB monomer. DNA wrap is dependent on ATP binding by UvrB and probably causes local melting of the DNA helix, facilitating insertion of UvrB beta-hairpin between the DNA strands. Then UvrB probes one DNA strand for the presence of a lesion. If a lesion is found the UvrA subunits dissociate and the UvrB-DNA preincision complex is formed. This complex is subsequently bound by UvrC and the second UvrB is released. If no lesion is found, the DNA wraps around the other UvrB subunit that will check the other stand for damage. In Staphylococcus aureus (strain Mu50 / ATCC 700699), this protein is UvrABC system protein B.